We begin with the raw amino-acid sequence, 160 residues long: Protein-export protein SecB (160 aa).

This sequence belongs to the SecB family. As to quaternary structure, homotetramer, a dimer of dimers. One homotetramer interacts with 1 SecA dimer.

The protein localises to the cytoplasm. In terms of biological role, one of the proteins required for the normal export of preproteins out of the cell cytoplasm. It is a molecular chaperone that binds to a subset of precursor proteins, maintaining them in a translocation-competent state. It also specifically binds to its receptor SecA. The chain is Protein-export protein SecB from Rhodospirillum rubrum (strain ATCC 11170 / ATH 1.1.1 / DSM 467 / LMG 4362 / NCIMB 8255 / S1).